We begin with the raw amino-acid sequence, 145 residues long: Pseudoazurin (145 aa).

The signal sequence occupies residues 1–22; it reads MFHHSLAAAAAALLALAAPGFA. A Plastocyanin-like domain is found at 27-115; it reads VHMLNKGESG…MGMVGLVQVG (89 aa). His62, Cys100, His103, and Met108 together coordinate Cu cation. The interval 126–145 is disordered; that stretch reads TAKMPKKARERMDAELAQVN.

Homodimer. Cu cation is required as a cofactor.

Its subcellular location is the periplasm. This soluble electron transfer copper protein is required for the inactivation of copper-containing nitrite reductase in the presence of oxygen. This Paracoccus pantotrophus (Thiosphaera pantotropha) protein is Pseudoazurin (pazS).